Consider the following 639-residue polypeptide: Threonine--tRNA ligase (639 aa).

The region spanning 1–61 is the TGS domain; that stretch reads MIRITLPDNS…DHDARLQIIT (61 aa). Residues 242–533 are catalytic; the sequence is DHRRLGRELD…LIEQHAGALP (292 aa). Cysteine 333, histidine 384, and histidine 510 together coordinate Zn(2+).

Belongs to the class-II aminoacyl-tRNA synthetase family. In terms of assembly, homodimer. Zn(2+) is required as a cofactor.

Its subcellular location is the cytoplasm. The enzyme catalyses tRNA(Thr) + L-threonine + ATP = L-threonyl-tRNA(Thr) + AMP + diphosphate + H(+). In terms of biological role, catalyzes the attachment of threonine to tRNA(Thr) in a two-step reaction: L-threonine is first activated by ATP to form Thr-AMP and then transferred to the acceptor end of tRNA(Thr). Also edits incorrectly charged L-seryl-tRNA(Thr). This is Threonine--tRNA ligase from Paracidovorax citrulli (strain AAC00-1) (Acidovorax citrulli).